A 340-amino-acid chain; its full sequence is Phosphoribosylformylglycinamidine cyclo-ligase (340 aa).

The protein belongs to the AIR synthase family.

It localises to the cytoplasm. The catalysed reaction is 2-formamido-N(1)-(5-O-phospho-beta-D-ribosyl)acetamidine + ATP = 5-amino-1-(5-phospho-beta-D-ribosyl)imidazole + ADP + phosphate + H(+). It functions in the pathway purine metabolism; IMP biosynthesis via de novo pathway; 5-amino-1-(5-phospho-D-ribosyl)imidazole from N(2)-formyl-N(1)-(5-phospho-D-ribosyl)glycinamide: step 2/2. This is Phosphoribosylformylglycinamidine cyclo-ligase from Streptococcus pneumoniae serotype 19F (strain G54).